Consider the following 423-residue polypeptide: 3-isopropylmalate dehydratase large subunit 1 (423 aa).

Residues Cys302, Cys362, and Cys365 each coordinate [4Fe-4S] cluster.

This sequence belongs to the aconitase/IPM isomerase family. LeuC type 2 subfamily. As to quaternary structure, heterodimer of LeuC and LeuD. Requires [4Fe-4S] cluster as cofactor.

The catalysed reaction is (2R,3S)-3-isopropylmalate = (2S)-2-isopropylmalate. Its pathway is amino-acid biosynthesis; L-leucine biosynthesis; L-leucine from 3-methyl-2-oxobutanoate: step 2/4. Its function is as follows. Catalyzes the isomerization between 2-isopropylmalate and 3-isopropylmalate, via the formation of 2-isopropylmaleate. This is 3-isopropylmalate dehydratase large subunit 1 from Pyrococcus abyssi (strain GE5 / Orsay).